Reading from the N-terminus, the 155-residue chain is Deoxyuridine 5'-triphosphate nucleotidohydrolase (155 aa).

Residues 74 to 76 (RSG), asparagine 87, and 91 to 93 (LID) each bind substrate.

This sequence belongs to the dUTPase family. It depends on Mg(2+) as a cofactor.

It carries out the reaction dUTP + H2O = dUMP + diphosphate + H(+). It functions in the pathway pyrimidine metabolism; dUMP biosynthesis; dUMP from dCTP (dUTP route): step 2/2. This enzyme is involved in nucleotide metabolism: it produces dUMP, the immediate precursor of thymidine nucleotides and it decreases the intracellular concentration of dUTP so that uracil cannot be incorporated into DNA. The chain is Deoxyuridine 5'-triphosphate nucleotidohydrolase from Xylella fastidiosa (strain M23).